We begin with the raw amino-acid sequence, 102 residues long: ATP synthase subunit c (102 aa).

2 consecutive transmembrane segments (helical) span residues I34–F54 and A80–A100.

Belongs to the ATPase C chain family. In terms of assembly, F-type ATPases have 2 components, F(1) - the catalytic core - and F(0) - the membrane proton channel. F(1) has five subunits: alpha(3), beta(3), gamma(1), delta(1), epsilon(1). F(0) has three main subunits: a(1), b(2) and c(10-14). The alpha and beta chains form an alternating ring which encloses part of the gamma chain. F(1) is attached to F(0) by a central stalk formed by the gamma and epsilon chains, while a peripheral stalk is formed by the delta and b chains.

It localises to the cell membrane. Functionally, f(1)F(0) ATP synthase produces ATP from ADP in the presence of a proton or sodium gradient. F-type ATPases consist of two structural domains, F(1) containing the extramembraneous catalytic core and F(0) containing the membrane proton channel, linked together by a central stalk and a peripheral stalk. During catalysis, ATP synthesis in the catalytic domain of F(1) is coupled via a rotary mechanism of the central stalk subunits to proton translocation. In terms of biological role, key component of the F(0) channel; it plays a direct role in translocation across the membrane. A homomeric c-ring of between 10-14 subunits forms the central stalk rotor element with the F(1) delta and epsilon subunits. The protein is ATP synthase subunit c of Mycoplasma genitalium (strain ATCC 33530 / DSM 19775 / NCTC 10195 / G37) (Mycoplasmoides genitalium).